The following is a 161-amino-acid chain: Nucleotide-binding protein Tcr_1902 (161 aa).

This sequence belongs to the YajQ family.

Functionally, nucleotide-binding protein. This Hydrogenovibrio crunogenus (strain DSM 25203 / XCL-2) (Thiomicrospira crunogena) protein is Nucleotide-binding protein Tcr_1902.